A 369-amino-acid chain; its full sequence is tRNA 2-selenouridine synthase (369 aa).

Positions 15–138 constitute a Rhodanese domain; sequence FLNQHPMMDV…MRQYLIGVIE (124 aa). The active-site S-selanylcysteine intermediate is the C98.

Belongs to the SelU family. In terms of assembly, monomer.

The catalysed reaction is 5-methylaminomethyl-2-thiouridine(34) in tRNA + selenophosphate + (2E)-geranyl diphosphate + H2O + H(+) = 5-methylaminomethyl-2-selenouridine(34) in tRNA + (2E)-thiogeraniol + phosphate + diphosphate. It catalyses the reaction 5-methylaminomethyl-2-thiouridine(34) in tRNA + (2E)-geranyl diphosphate = 5-methylaminomethyl-S-(2E)-geranyl-thiouridine(34) in tRNA + diphosphate. The enzyme catalyses 5-methylaminomethyl-S-(2E)-geranyl-thiouridine(34) in tRNA + selenophosphate + H(+) = 5-methylaminomethyl-2-(Se-phospho)selenouridine(34) in tRNA + (2E)-thiogeraniol. It carries out the reaction 5-methylaminomethyl-2-(Se-phospho)selenouridine(34) in tRNA + H2O = 5-methylaminomethyl-2-selenouridine(34) in tRNA + phosphate. Involved in the post-transcriptional modification of the uridine at the wobble position (U34) of tRNA(Lys), tRNA(Glu) and tRNA(Gln). Catalyzes the conversion of 2-thiouridine (S2U-RNA) to 2-selenouridine (Se2U-RNA). Acts in a two-step process involving geranylation of 2-thiouridine (S2U) to S-geranyl-2-thiouridine (geS2U) and subsequent selenation of the latter derivative to 2-selenouridine (Se2U) in the tRNA chain. This chain is tRNA 2-selenouridine synthase, found in Shewanella sp. (strain W3-18-1).